Reading from the N-terminus, the 429-residue chain is MKKQRNLRSMAAQAVEQVVEQGQSLSNILPPLQQKVSDKDKALLQELCFGVLRTLSQLDWLINKLMARPMTGKQRTVHYLIMVGLYQLLYTRIPPHAALAETVEGAVAIKRPQLKGLINGVLRQFQRQQDELLAEFNASDARYLHPSWLLKRLQKAYPEQWQSIVEANNQRPPMWLRVNRTHHSRDSWLALLDEAGMKGFPHADYPDAVQLETPAPVHALPGFEEGWVTVQDASAQGCMTWLAPQNGEHILDLCAAPGGKTTHILEVAPEAQVLAVDIDEQRLSRVYDNLKRLGMKATVKQGDGRYPSQWCGEQQFDRILLDAPCSATGVIRRHPDIKWLRRDRDIPELAQLQSEILDAIWPHLKSGGTLVYATCSVLPEENSLQIKAFLQRTADAELCETGTPEQPGKQNLPGAEEGDGFFYAKLIKK.

S-adenosyl-L-methionine is bound by residues 254 to 260 (CAAPGGK), D277, D303, and D322. C375 functions as the Nucleophile in the catalytic mechanism.

The protein belongs to the class I-like SAM-binding methyltransferase superfamily. RsmB/NOP family.

The protein localises to the cytoplasm. It catalyses the reaction cytidine(967) in 16S rRNA + S-adenosyl-L-methionine = 5-methylcytidine(967) in 16S rRNA + S-adenosyl-L-homocysteine + H(+). In terms of biological role, specifically methylates the cytosine at position 967 (m5C967) of 16S rRNA. The protein is Ribosomal RNA small subunit methyltransferase B of Escherichia coli O7:K1 (strain IAI39 / ExPEC).